A 163-amino-acid chain; its full sequence is Lipoprotein signal peptidase (163 aa).

3 consecutive transmembrane segments (helical) span residues 11–31 (ILIAVFVVIFDQVTKYIIATT), 64–84 (MTFFFIITIIILIALVYFFIN), and 88–108 (YNLFMQVAISLLFAGALGNFI). Active-site residues include Asp118 and Asp136. A helical transmembrane segment spans residues 131-151 (IFNIADSSLTIGVILIIIALL).

The protein belongs to the peptidase A8 family.

It is found in the cell membrane. It carries out the reaction Release of signal peptides from bacterial membrane prolipoproteins. Hydrolyzes -Xaa-Yaa-Zaa-|-(S,diacylglyceryl)Cys-, in which Xaa is hydrophobic (preferably Leu), and Yaa (Ala or Ser) and Zaa (Gly or Ala) have small, neutral side chains.. It participates in protein modification; lipoprotein biosynthesis (signal peptide cleavage). This protein specifically catalyzes the removal of signal peptides from prolipoproteins. The chain is Lipoprotein signal peptidase from Staphylococcus aureus (strain bovine RF122 / ET3-1).